Here is a 341-residue protein sequence, read N- to C-terminus: Processive diacylglycerol beta-glycosyltransferase (341 aa).

This sequence belongs to the glycosyltransferase 2 family. Mg(2+) serves as cofactor.

It is found in the cell membrane. The enzyme catalyses a 1,2-diacyl-sn-glycerol + UDP-alpha-D-glucose = a 1,2-diacyl-3-O-(beta-D-glucopyranosyl)-sn-glycerol + UDP + H(+). The catalysed reaction is a 1,2-diacyl-sn-glycerol + UDP-alpha-D-galactose = a 1,2-diacyl-3-O-(beta-D-galactosyl)-sn-glycerol + UDP + H(+). It catalyses the reaction a 1,2-diacyl-3-O-(beta-D-glucopyranosyl)-sn-glycerol + UDP-alpha-D-glucose = a 1,2-diacyl-3-O-(beta-D-Glc-(1-&gt;6)-beta-D-Glc)-sn-glycerol + UDP + H(+). It carries out the reaction a 1,2-diacyl-3-O-(beta-D-galactosyl)-sn-glycerol + UDP-alpha-D-galactose = a 1,2-diacyl-3-O-[beta-D-galactosyl-(1-&gt;6)-beta-D-galactosyl]-sn-glycerol + UDP + H(+). Its pathway is glycolipid metabolism; diglucosyl-diacylglycerol biosynthesis. With respect to regulation, activated by the negatively charged lipid dioleoylphosphatidylglycerol (DOPG) and inhibited by N-(n-nonyl)deoxygalactonojirimycin (C9J). Processive glycosyltransferase involved in the biosynthesis of both the non-bilayer-prone beta-monoglycosyldiacylglycerol and the bilayer-forming membrane lipid beta-diglycosyldiacylglycerol. These components contribute to regulate the properties and stability of the membrane. Catalyzes sequentially the transfers of glucosyl or galactosyl residues from UDP-Glc or UDP-Gal to diacylglycerol (DAG) acceptor to form the corresponding beta-glycosyl-DAG (3-O-(beta-D-glycopyranosyl)-1,2-diacyl-sn-glycerol), which then acts as acceptor to give beta-diglycosyl-DAG product (3-O-(beta-D-glycopyranosyl-beta-(1-&gt;6)-D-glycopyranosyl)-1,2-diacyl-sn-glycerol). Dioleoylglycerol (DOG) is a preferred sugar acceptor than 3-O-(beta-D-glucopyranosyl)-1,2-dioleoyl-sn-glycerol. This Mycoplasma genitalium (strain ATCC 33530 / DSM 19775 / NCTC 10195 / G37) (Mycoplasmoides genitalium) protein is Processive diacylglycerol beta-glycosyltransferase.